The sequence spans 501 residues: Nuclear receptor subfamily 5 group A member 2 (501 aa).

The nuclear receptor DNA-binding region spans 43 to 114; sequence EELCPVCGDK…KCLSVGMKLE (72 aa). Zn(2+)-binding residues include Cys-46, Cys-49, Cys-63, Cys-66, Cys-82, Cys-88, Cys-98, and Cys-101. 2 consecutive NR C4-type zinc fingers follow at residues 46–66 and 82–106; these read CPVC…CESC and CIEN…FQKC. The C-terminal extension (CTE) stretch occupies residues 112 to 127; the sequence is KLEAVRADRMRGGRNK. Residues 128–147 carry the FTZ-F1 box motif; it reads FGPMYKRDRALKQQKKALIR. Residues 186–207 are disordered; it reads NHTALPPTDYDRSPFVTSPISM. An NR LBD domain is found at 260-499; sequence SIPHLILELQ…NLLIEMLHAK (240 aa). Residues 381–384, Tyr-476, and Lys-480 contribute to the a phospholipid derivative site; that span reads GATL. The AF-2 stretch occupies residues 488 to 499; that stretch reads CNNLLIEMLHAK.

Belongs to the nuclear hormone receptor family. NR5 subfamily. As to quaternary structure, monomer; Binds DNA as a monomer. Detected in liver and adrenal gland.

Its subcellular location is the nucleus. The protein resides in the chromosome. Orphan nuclear receptor that binds DNA as a monomer to the 5'-TCAAGGCCA-3' sequence and controls expression of target genes: regulates key biological processes, such as cholesterol and bile acid synthesis pathways, as well as cartilage, liver and pancreas morphogenesis. Ligand-binding causes conformational change which causes recruitment of coactivators, promoting target gene activation. The specific ligand is unknown, but specific phospholipids, such as phosphatidylethanolamine, phosphatidylserine, dilauroyl phosphatidylcholine and diundecanoyl phosphatidylcholine can act as ligand in vitro. Acts as a pioneer transcription factor, which unwraps target DNA from histones and elicits local opening of closed chromatin. Involved in the formation of connective tissue in lower jaw. The sequence is that of Nuclear receptor subfamily 5 group A member 2 from Gallus gallus (Chicken).